A 778-amino-acid polypeptide reads, in one-letter code: Probable glutamine--tRNA ligase (778 aa).

Basic and acidic residues predominate over residues 188 to 205; the sequence is LKPQTKANDKPKAAKPKA. Residues 188–219 are disordered; that stretch reads LKPQTKANDKPKAAKPKAEVTPAAQTAEAASD. Residues 273–283 carry the 'HIGH' region motif; that stretch reads PEPNGILHIGH. ATP-binding positions include 274-276 and 280-286; these read EPN and HIGHAKA. 2 residues coordinate L-glutamine: aspartate 306 and tyrosine 441. ATP is bound by residues threonine 460, 489 to 490, and 497 to 499; these read RL and VSK. A 'KMSKS' region motif is present at residues 496-500; sequence LVSKR.

It belongs to the class-I aminoacyl-tRNA synthetase family.

The enzyme catalyses tRNA(Gln) + L-glutamine + ATP = L-glutaminyl-tRNA(Gln) + AMP + diphosphate. The polypeptide is Probable glutamine--tRNA ligase (Drosophila melanogaster (Fruit fly)).